Here is a 363-residue protein sequence, read N- to C-terminus: Lovastatin nonaketide synthase, enoyl reductase component lovC (363 aa).

Residues 51 to 54 (SDTK), 174 to 177 (STAT), 197 to 200 (SPHN), tyrosine 215, 262 to 263 (LN), threonine 280, and 351 to 352 (LS) each bind NADP(+). Residues 226–272 (TYTKNNLRYALDCITNVESTTFCFAAIGRAGGHYVSLNPFPEHAATR) form a lovB-binding region.

Belongs to the zinc-containing alcohol dehydrogenase family. As to quaternary structure, each MAT domain from the lovB homodimer binds one lovC molecule to form the final active lovB-lovC megasynthase complex.

It carries out the reaction holo-[lovastatin nonaketide synthase] + 9 malonyl-CoA + S-adenosyl-L-methionine + 11 NADPH + 19 H(+) = dihydromonacolin L-[lovastatin nonaketide synthase] + S-adenosyl-L-homocysteine + 9 CO2 + 11 NADP(+) + 9 CoA + 6 H2O. Its pathway is polyketide biosynthesis; lovastatin biosynthesis. Trans-enoyl reductase; part of the gene cluster that mediates the biosynthesis of lovastatin (also known as mevinolin, mevacor or monacolin K), a hypolipidemic inhibitor of (3S)-hydroxymethylglutaryl-coenzyme A (HMG-CoA) reductase (HMGR). The first step in the biosynthesis of lovastatin is the production of dihydromonacolin L acid (DML) by the lovastatin nonaketide synthase lovB and the trans-acting enoyl reductase lovC (called the lovB-lovC megasynthase complex) via condensation of one acetyl-CoA unit and 8 malonyl-CoA units. The formation of the LovB/C complex is essential for the integrity of the catalytic chamber to the complete total synthesis of DML acid. Dihydromonacolin L acid is released from lovB by the thioesterase lovG. Next, dihydromonacolin L acid is oxidized by the dihydromonacolin L monooxygenase lovA twice to form monacolin J acid. The 2-methylbutyrate moiety of lovastatin is synthesized by the lovastatin diketide synthase lovF via condensation of one acetyl-CoA unit and one malonyl-CoA unit. Finally, the covalent attachment of this moiety to monacolin J acid is catalyzed by the transesterase lovD to yield lovastatin. LovD has broad substrate specificity and can also convert monacolin J to simvastatin using alpha-dimethylbutanoyl-S-methyl-3-mercaptopropionate (DMB-S-MMP) as the thioester acyl donor, and can also catalyze the reverse reaction and function as hydrolase in vitro. LovD has much higher activity with LovF-bound 2-methylbutanoate than with free diketide substrates. The chain is Lovastatin nonaketide synthase, enoyl reductase component lovC from Aspergillus terreus.